We begin with the raw amino-acid sequence, 805 residues long: Polycystin-2-like protein 1 (805 aa).

Residues 1–59 (MNAVGSPEGQELQKLGSGAWDNPAYSGPPSPHGTLRVCTISSTGPLQPQPKKPEDEPQE) are disordered. Topologically, residues 1–103 (MNAVGSPEGQ…ELYIKTTLRE (103 aa)) are cytoplasmic. A lipid anchor (S-palmitoyl cysteine) is attached at Cys-38. Residues 104–124 (LLVYIVFLVDICLLTYGMTSS) form a helical membrane-spanning segment. Residues 125-356 (SAYYYTKVMS…NWDFFIVGCE (232 aa)) lie on the Extracellular side of the membrane. N-linked (GlcNAc...) asparagine glycosylation is found at Asn-177 and Asn-207. The cysteines at positions 210 and 223 are disulfide-linked. N-linked (GlcNAc...) asparagine glycosylation occurs at Asn-241. The helical transmembrane segment at 357–376 (VIFCVFIFYYVVEEILELHI) threads the bilayer. Ca(2+)-binding residues include Glu-370 and Glu-373. At 377 to 384 (HRLRYLSS) the chain is on the cytoplasmic side. A helical membrane pass occupies residues 385–405 (IWNILDLVVILLSIVAVGFHI). Residues Asn-387 and Asp-390 each coordinate Ca(2+). The Extracellular segment spans residues 406–433 (FRTLEVNRLMGKLLQQPNTYADFEFLAF). The chain crosses the membrane as a helical span at residues 434–454 (WQTQYNNMNAVNLFFAWIKIF). The Cytoplasmic segment spans residues 455–479 (KYISFNKTMTQLSSTLARCAKDILG). Residues 480-499 (FAVMFFIVFFAYAQLGYLLF) traverse the membrane as a helical segment. Over 500–511 (GTQVENFSTFIK) the chain is Extracellular. An N-linked (GlcNAc...) asparagine glycan is attached at Asn-505. The pore-forming intramembrane region spans 512-526 (CIFTQFRIILGDFDY). The Extracellular portion of the chain corresponds to 527 to 536 (NAIDNANRIL). Residues 537–557 (GPAYFVTYVFFVFFVLLNMFL) traverse the membrane as a helical segment. The Cytoplasmic segment spans residues 558-805 (AIINDTYSEV…RGEIPTLQRS (248 aa)). The EF-hand domain maps to 633–668 (HEITELTATFTKFDRDGNRILDEKEQEKMRQDLEEE). 2 coiled-coil regions span residues 650-686 (NRIL…IVSS) and 700-740 (GWVS…MLER). The required for homooligomerization stretch occupies residues 704–763 (GEEFYMLTRRVLQLETVLEGVVSQIDAVGSKLKMLERKGWLAPSPGVKEQAIWKHPQPAP). The segment at 759–805 (PQPAPAVTPDPWGVQGGQESEVPYKREEEALEERRLSRGEIPTLQRS) is disordered. A compositionally biased stretch (basic and acidic residues) spans 780-796 (VPYKREEEALEERRLSR).

This sequence belongs to the polycystin family. In terms of assembly, oligomer. Functional PKD2L1 homotetramer can be formed either through C-terminal trimerization followed by N-terminal dimerization of a fourth subunit with a subunit in the trimer or through dimerization followed by trimerization. Heterotetramer with either PKD1L1, PKD1L3 or PKD1; the heterotetrameric complex contains three PKD1L2 chains plus one chain from another family member. Interacts with PKD1L1, forming a ciliary calcium channel. Interacts with PKD1L3, forming a cation channel that is activated by low extracellular pH. Interacts with PKD1; this heteromeric functional cation channels is opened by hypo-osmotic stimulation. Interacts with RACK1; inhibits the channel activity possibly by impairing localization to the cell membrane. In terms of processing, palmitoylation is important for expression at the cell membrane and for channel activity. Detected in taste bud cells in fungiform papillae (at protein level). Ubiquitous. Expressed in adult heart, skeletal muscle, brain, spleen, testis, retina and liver. Isoform 4 appears to be expressed only in transformed lymphoblasts.

It localises to the cell projection. The protein resides in the cilium membrane. The protein localises to the cell membrane. It is found in the cytoplasmic vesicle. It carries out the reaction Ca(2+)(in) = Ca(2+)(out). The enzyme catalyses Na(+)(in) = Na(+)(out). It catalyses the reaction K(+)(in) = K(+)(out). The catalysed reaction is Mg(2+)(in) = Mg(2+)(out). With respect to regulation, the non-selective cation channel is gated following an off-response property by acid: gated open after the removal of acid stimulus, but not during acid application. Channel activity is inhibited by phosphatidylinositol-4,5-bisphosphate (PIP2). Non-selective cation channel activity is substantially increased when either the extracellular or intracellular calcium-ion concentration is raised. Regulation of non-selective cation channel activity by external calcium is bimodal, first sensitizing and subsequently inactivating the current. Homotetrameric, non-selective cation channel that is permeable to sodium, potassium, magnesium and calcium. Also forms functionnal heteromeric channels with PKD1, PKD1L1 and PKD1L3. Pore-forming subunit of a heterotetrameric, non-selective cation channel, formed by PKD1L2 and PKD1L3, that is permeable to sodium, potassium, magnesium and calcium and which may act as a sour taste receptor in gustatory cells; however, its contribution to sour taste perception is unclear in vivo and may be indirect. The homomeric and heteromeric channels formed by PKD1L2 and PKD1L3 are activated by low pH and Ca(2+), but opens only when the extracellular pH rises again and after the removal of acid stimulus. Pore-forming subunit of a calcium-permeant ion channel formed by PKD1L2 and PKD1L1 in primary cilia, where it controls cilium calcium concentration, without affecting cytoplasmic calcium concentration, and regulates sonic hedgehog/SHH signaling and GLI2 transcription. The PKD1L1:PKD2L1 complex channel is mechanosensitive only at high pressures and is highly temperature sensitive. Pore-forming subunit of a calcium-permeant ion channel formed by PKD1L2 and PKD1 that produces a transient increase in intracellular calcium concentration upon hypo-osmotic stimulation (200 mOsm). May play a role in the perception of carbonation taste. May play a role in the sensory perception of water, via a mechanism that activates the channel in response to dilution of salivary bicarbonate and changes in salivary pH. The chain is Polycystin-2-like protein 1 from Homo sapiens (Human).